Reading from the N-terminus, the 212-residue chain is Major fimbrial subunit (212 aa).

An N-terminal signal peptide occupies residues 1-18 (MKKTLLGSLILLAFATNA). Residues C42 and C82 are joined by a disulfide bond.

This sequence belongs to the fimbrial protein family.

It is found in the fimbrium. Its function is as follows. Mediates adherence to oropharyngeal epithelial cells. Helps the airway colonization process. The protein is Major fimbrial subunit (hifA) of Haemophilus influenzae.